The chain runs to 473 residues: Ion-translocating oxidoreductase complex subunit C (473 aa).

2 4Fe-4S ferredoxin-type domains span residues 328 to 357 (KNES…QQLY) and 368 to 396 (TKKH…VKYF). [4Fe-4S] cluster is bound by residues C337, C340, C343, C347, C376, C379, C382, and C386.

Belongs to the 4Fe4S bacterial-type ferredoxin family. RnfC subfamily. As to quaternary structure, the complex is composed of six subunits: RnfA, RnfB, RnfC, RnfD, RnfE and RnfG. [4Fe-4S] cluster serves as cofactor.

The protein resides in the cell inner membrane. Functionally, part of a membrane-bound complex that couples electron transfer with translocation of ions across the membrane. The protein is Ion-translocating oxidoreductase complex subunit C of Buchnera aphidicola subsp. Acyrthosiphon pisum (strain APS) (Acyrthosiphon pisum symbiotic bacterium).